A 225-amino-acid chain; its full sequence is Type II restriction enzyme BslI subunit alpha (225 aa).

C4-type zinc fingers lie at residues 36 to 53 and 63 to 84; these read CKDC…CYFC and CNSC…TDGC.

Heterotetramer of two alpha and two beta subunits. The alpha subunit is believed to be responsible for DNA recognition, while the beta subunit is thought to mediate cleavage. Zn(2+) is required as a cofactor.

It carries out the reaction Endonucleolytic cleavage of DNA to give specific double-stranded fragments with terminal 5'-phosphates.. Its function is as follows. A P subtype restriction enzyme that recognizes the double-stranded sequence 5'-CCN(7)GG-3' and cleaves after N-7. This Bacillus sp. (strain NEB-606) protein is Type II restriction enzyme BslI subunit alpha.